Here is a 245-residue protein sequence, read N- to C-terminus: Flavin-dependent thymidylate synthase (245 aa).

Positions 6–220 (PRVELLAHTP…PELFAHAGAK (215 aa)) constitute a ThyX domain. FAD-binding positions include S65, 89–91 (RHR), and Q97. DUMP contacts are provided by residues 86–89 (QLVR), 97–101 (QQSQR), and R159. Residues 89-99 (RHRIASFSQQS) carry the ThyX motif motif. FAD-binding positions include 175–177 (NCR) and H181. DUMP is bound at residue R186. R186 acts as the Involved in ionization of N3 of dUMP, leading to its activation in catalysis.

Belongs to the thymidylate synthase ThyX family. As to quaternary structure, homotetramer. FAD serves as cofactor.

It carries out the reaction dUMP + (6R)-5,10-methylene-5,6,7,8-tetrahydrofolate + NADPH + H(+) = dTMP + (6S)-5,6,7,8-tetrahydrofolate + NADP(+). It functions in the pathway pyrimidine metabolism; dTTP biosynthesis. In terms of biological role, catalyzes the reductive methylation of 2'-deoxyuridine-5'-monophosphate (dUMP) to 2'-deoxythymidine-5'-monophosphate (dTMP) while utilizing 5,10-methylenetetrahydrofolate (mTHF) as the methyl donor, and NADPH and FADH(2) as the reductant. This chain is Flavin-dependent thymidylate synthase, found in Nitratidesulfovibrio vulgaris (strain ATCC 29579 / DSM 644 / CCUG 34227 / NCIMB 8303 / VKM B-1760 / Hildenborough) (Desulfovibrio vulgaris).